Consider the following 321-residue polypeptide: Lipoyl synthase (321 aa).

[4Fe-4S] cluster contacts are provided by C68, C73, C79, C94, C98, C101, and S308. The region spanning 80–297 (FNHGTATFMI…KQEALAMGFT (218 aa)) is the Radical SAM core domain.

It belongs to the radical SAM superfamily. Lipoyl synthase family. It depends on [4Fe-4S] cluster as a cofactor.

The protein resides in the cytoplasm. It carries out the reaction [[Fe-S] cluster scaffold protein carrying a second [4Fe-4S](2+) cluster] + N(6)-octanoyl-L-lysyl-[protein] + 2 oxidized [2Fe-2S]-[ferredoxin] + 2 S-adenosyl-L-methionine + 4 H(+) = [[Fe-S] cluster scaffold protein] + N(6)-[(R)-dihydrolipoyl]-L-lysyl-[protein] + 4 Fe(3+) + 2 hydrogen sulfide + 2 5'-deoxyadenosine + 2 L-methionine + 2 reduced [2Fe-2S]-[ferredoxin]. The protein operates within protein modification; protein lipoylation via endogenous pathway; protein N(6)-(lipoyl)lysine from octanoyl-[acyl-carrier-protein]: step 2/2. Catalyzes the radical-mediated insertion of two sulfur atoms into the C-6 and C-8 positions of the octanoyl moiety bound to the lipoyl domains of lipoate-dependent enzymes, thereby converting the octanoylated domains into lipoylated derivatives. This Sodalis glossinidius (strain morsitans) protein is Lipoyl synthase.